The chain runs to 428 residues: Light-independent protochlorophyllide reductase subunit N (428 aa).

3 residues coordinate [4Fe-4S] cluster: C29, C54, and C115.

The protein belongs to the BchN/ChlN family. In terms of assembly, protochlorophyllide reductase is composed of three subunits; BchL, BchN and BchB. Forms a heterotetramer of two BchB and two BchN subunits. [4Fe-4S] cluster is required as a cofactor.

It carries out the reaction chlorophyllide a + oxidized 2[4Fe-4S]-[ferredoxin] + 2 ADP + 2 phosphate = protochlorophyllide a + reduced 2[4Fe-4S]-[ferredoxin] + 2 ATP + 2 H2O. It participates in porphyrin-containing compound metabolism; bacteriochlorophyll biosynthesis (light-independent). In terms of biological role, component of the dark-operative protochlorophyllide reductase (DPOR) that uses Mg-ATP and reduced ferredoxin to reduce ring D of protochlorophyllide (Pchlide) to form chlorophyllide a (Chlide). This reaction is light-independent. The NB-protein (BchN-BchB) is the catalytic component of the complex. The chain is Light-independent protochlorophyllide reductase subunit N from Cereibacter sphaeroides (strain KD131 / KCTC 12085) (Rhodobacter sphaeroides).